Consider the following 46-residue polypeptide: Escargot/snail protein homolog (46 aa).

C2H2-type zinc fingers lie at residues 1–4, 8–30, and 36–46; these read IRTH, CKCP…TTHH, and FSCQHCNRAFA.

This sequence belongs to the snail C2H2-type zinc-finger protein family.

It localises to the nucleus. The protein is Escargot/snail protein homolog of Oryzias latipes (Japanese rice fish).